The chain runs to 311 residues: Deacetoxycephalosporin C synthase (311 aa).

In terms of domain architecture, Fe2OG dioxygenase spans 154-267 (DCEPLLRFRY…RTSSVFFLRP (114 aa)).

This sequence belongs to the iron/ascorbate-dependent oxidoreductase family. Fe cation serves as cofactor. It depends on L-ascorbate as a cofactor.

The catalysed reaction is penicillin N + 2-oxoglutarate + O2 = deacetoxycephalosporin C + succinate + CO2 + H2O. It participates in antibiotic biosynthesis; cephalosporin C biosynthesis. Catalyzes the step from penicillin N to deacetoxy-cephalosporin C. This chain is Deacetoxycephalosporin C synthase (cefE), found in Streptomyces clavuligerus.